Here is a 298-residue protein sequence, read N- to C-terminus: Apolipoprotein E (298 aa).

The signal sequence occupies residues 1 to 18 (MKVLWAALVVTLLAGCQA). 6 tandem repeats follow at residues 74 to 95 (LLMEDTMKEVKAYKSELEQELA), 96 to 117 (PMAEDTKARLSKELQAAQSRLR), 118 to 139 (ADMEEVLNRLSQYRGEVQTMMG), 140 to 161 (QSGEELRARLAAHLRKLRKRLL), 162 to 183 (RDVEEVQKRMDVYRAGAQEGAE), and 223 to 244 (GRLEKVGSQARDRLEEVREQME). Residues 74-244 (LLMEDTMKEV…RLEEVREQME (171 aa)) are 8 X 22 AA approximate tandem repeats. Position 137 is a methionine sulfoxide (M137). S141 bears the Phosphoserine mark. Positions 152–162 (HLRKLRKRLLR) are LDL and other lipoprotein receptors binding. Heparin is bound at residue 156-159 (LRKR). A lipid-binding and lipoprotein association region spans residues 204–272 (SLPSQPLRER…SWFEPMMEDM (69 aa)). Heparin is bound at residue 218 to 225 (GEQMRGRL). Positions 260 to 272 (RFKSWFEPMMEDM) are specificity for association with VLDL.

Belongs to the apolipoprotein A1/A4/E family. In terms of assembly, homotetramer. May interact with ABCA1; functionally associated with ABCA1 in the biogenesis of HDLs. May interact with APP/A4 amyloid-beta peptide; the interaction is extremely stable in vitro but its physiological significance is unclear. May interact with MAPT. May interact with MAP2. In the cerebrospinal fluid, interacts with secreted SORL1. Interacts with PMEL; this allows the loading of PMEL luminal fragment on ILVs to induce fibril nucleation. In terms of processing, APOE exists as multiple glycosylated and sialylated glycoforms within cells and in plasma. The extent of glycosylation and sialylation are tissue and context specific. Glycated in plasma VLDL. Post-translationally, phosphorylated by FAM20C in the extracellular medium.

Its subcellular location is the secreted. It is found in the extracellular space. The protein resides in the extracellular matrix. The protein localises to the extracellular vesicle. It localises to the endosome. Its subcellular location is the multivesicular body. In terms of biological role, APOE is an apolipoprotein, a protein associating with lipid particles, that mainly functions in lipoprotein-mediated lipid transport between organs via the plasma and interstitial fluids. APOE is a core component of plasma lipoproteins and is involved in their production, conversion and clearance. Apolipoproteins are amphipathic molecules that interact both with lipids of the lipoprotein particle core and the aqueous environment of the plasma. As such, APOE associates with chylomicrons, chylomicron remnants, very low density lipoproteins (VLDL) and intermediate density lipoproteins (IDL) but shows a preferential binding to high-density lipoproteins (HDL). It also binds a wide range of cellular receptors including the LDL receptor/LDLR, the LDL receptor-related proteins LRP1, LRP2 and LRP8 and the very low-density lipoprotein receptor/VLDLR that mediate the cellular uptake of the APOE-containing lipoprotein particles. Finally, APOE also has a heparin-binding activity and binds heparan-sulfate proteoglycans on the surface of cells, a property that supports the capture and the receptor-mediated uptake of APOE-containing lipoproteins by cells. A main function of APOE is to mediate lipoprotein clearance through the uptake of chylomicrons, VLDLs, and HDLs by hepatocytes. APOE is also involved in the biosynthesis by the liver of VLDLs as well as their uptake by peripheral tissues ensuring the delivery of triglycerides and energy storage in muscle, heart and adipose tissues. By participating in the lipoprotein-mediated distribution of lipids among tissues, APOE plays a critical role in plasma and tissues lipid homeostasis. APOE is also involved in two steps of reverse cholesterol transport, the HDLs-mediated transport of cholesterol from peripheral tissues to the liver, and thereby plays an important role in cholesterol homeostasis. First, it is functionally associated with ABCA1 in the biogenesis of HDLs in tissues. Second, it is enriched in circulating HDLs and mediates their uptake by hepatocytes. APOE also plays an important role in lipid transport in the central nervous system, regulating neuron survival and sprouting. The chain is Apolipoprotein E (APOE) from Dasyprocta punctata (Central American agouti).